An 87-amino-acid polypeptide reads, in one-letter code: Small ribosomal subunit protein bS20 (87 aa).

Belongs to the bacterial ribosomal protein bS20 family.

In terms of biological role, binds directly to 16S ribosomal RNA. The polypeptide is Small ribosomal subunit protein bS20 (Alkaliphilus metalliredigens (strain QYMF)).